The sequence spans 815 residues: ABC transporter G family member 7 (815 aa).

Disordered stretches follow at residues asparagine 81–phenylalanine 141 and lysine 177–lysine 249. Residues glutamate 164–serine 199 adopt a coiled-coil conformation. Positions serine 194–serine 210 are enriched in low complexity. Over residues glycine 211 to glycine 248 the composition is skewed to polar residues. Residues threonine 242–asparagine 485 form the ABC transporter domain. ATP is bound at residue glycine 274–serine 281. The ABC transmembrane type-2 domain maps to threonine 562–leucine 810. 7 helical membrane-spanning segments follow: residues leucine 568–serine 588, isoleucine 598–leucine 618, alanine 647–leucine 667, phenylalanine 675–isoleucine 695, phenylalanine 706–valine 726, serine 732–alanine 752, and glycine 788–serine 808.

Belongs to the ABC transporter superfamily. ABCG family.

It is found in the membrane. The polypeptide is ABC transporter G family member 7 (abcG7) (Dictyostelium discoideum (Social amoeba)).